The sequence spans 316 residues: Cilia-and flagella-associated protein 96 (316 aa).

Residues E220–M242 form a disordered region. The segment covering F227 to K237 has biased composition (low complexity).

Belongs to the CFAP96 family.

The protein localises to the cytoplasm. Its subcellular location is the cytoskeleton. It localises to the microtubule organizing center. The protein resides in the centrosome. This chain is Cilia-and flagella-associated protein 96 (Cfap96), found in Mus musculus (Mouse).